The primary structure comprises 290 residues: MKFLRSVYAFCSSWVGTIIIVLLVIFFIAQAFIIPSRSMVGTLYEGDMLFVKKFSYGIPIPKIPWIELPVMPDFKNNGHLIEGDRPKRGEVVVFIPPHEKKSYYVKRNFAIGGDEVLFTNEGFYLHPFESGNDKDYISKHYPNALTKEFMGKIFVLNPYKSKHPGIHYQKDNETFHLMEQLATQGAEANISMQLIQMEGEKVFYKKINHDEFFMIGDNRDNSSDSRFWGSVAYKNIVGSPWFVYFSLSLKNSLEVDAENNPKKRYLVRWERMFKSVEGLEKIIKKEKATH.

Topologically, residues 1-13 are cytoplasmic; the sequence is MKFLRSVYAFCSS. A helical membrane pass occupies residues 14-34; that stretch reads WVGTIIIVLLVIFFIAQAFII. Residues 35 to 290 lie on the Extracellular side of the membrane; it reads PSRSMVGTLY…KIIKKEKATH (256 aa). Residues Ser38 and Lys106 contribute to the active site.

Belongs to the peptidase S26 family.

Its subcellular location is the cell membrane. It carries out the reaction Cleavage of hydrophobic, N-terminal signal or leader sequences from secreted and periplasmic proteins.. The chain is Signal peptidase I (lepB) from Helicobacter pylori (strain J99 / ATCC 700824) (Campylobacter pylori J99).